A 79-amino-acid polypeptide reads, in one-letter code: Small ribosomal subunit protein bS18 (79 aa).

This sequence belongs to the bacterial ribosomal protein bS18 family. As to quaternary structure, part of the 30S ribosomal subunit. Forms a tight heterodimer with protein bS6.

Its function is as follows. Binds as a heterodimer with protein bS6 to the central domain of the 16S rRNA, where it helps stabilize the platform of the 30S subunit. This Nitrobacter hamburgensis (strain DSM 10229 / NCIMB 13809 / X14) protein is Small ribosomal subunit protein bS18.